A 347-amino-acid polypeptide reads, in one-letter code: 4-hydroxy-2-oxovalerate aldolase (347 aa).

Residues 11 to 262 (PVVVDTTLRD…NPGLDVFKLL (252 aa)) form the Pyruvate carboxyltransferase domain. A substrate-binding site is contributed by 19–20 (RD). Position 20 (aspartate 20) interacts with Mn(2+). Histidine 23 (proton acceptor) is an active-site residue. The substrate site is built by serine 173 and histidine 201. Residues histidine 201 and histidine 203 each contribute to the Mn(2+) site. Position 292 (tyrosine 292) interacts with substrate.

The protein belongs to the 4-hydroxy-2-oxovalerate aldolase family. In terms of assembly, homodimer. Can also form a heterotetramer composed of two aldolase (TTHB246) and two dehydrogenase (TTHB247) subunits. Upon complex formation, the aldolase shows a 5-fold increase in substrate affinity, while the dehydrogenase shows a 3-fold decrease; the kcat values of each enzyme are reduced by 2-fold when they are in a complex. Co(2+) serves as cofactor. Requires Ni(2+) as cofactor. It depends on Mn(2+) as a cofactor.

The enzyme catalyses (S)-4-hydroxy-2-oxopentanoate = acetaldehyde + pyruvate. It catalyses the reaction (S)-4-hydroxy-2-oxohexanoate = propanal + pyruvate. With respect to regulation, appears to be allosterically activated by NADH. Functionally, catalyzes the retro-aldol cleavage of both 4-hydroxy-2-oxopentanoate (HOPA) and 4-hydroxy-2-oxohexanoate (HOHA) to pyruvate and acetaldehyde or propanaldehyde, respectively. The aldehydes produced by this reaction are directly channeled to the dehydrogenase TTHB247, ensuring that these toxic aldehydes are sequestered from cellular components. Is involved in the meta-cleavage pathway for the degradation of aromatic compounds. Appears to be stereospecific since it can cleave (4S)-4-hydroxy-2-oxopentanoate but not the (4R) isomer. Is not able to catalyze the aldol addition of 2-oxobutyrate with acetaldehyde; this indicates that the enzyme is specific for pyruvate as the carbonyl donor. This chain is 4-hydroxy-2-oxovalerate aldolase, found in Thermus thermophilus (strain ATCC 27634 / DSM 579 / HB8).